The chain runs to 475 residues: MSPQTETKAKVGFKAGVKDYKLTYYTPDYQTKDTDILAAFRVTPQPGVPPEEAGAAVAAESSTGTWTTVWTDGLTSLDRYKGRCYEIEPVPGEDNQFIAYVAYPLDLFEEGSVTNMFTSIVGNVFGFKALRALRLEDLRIPYAYVKTFQGPPHGIQVERDKLNKYGRPLLGCTIKPKLGLSAKNYGRAVYECLRGGLDFTKDDENVNSQPFMRWRDRFLFCAEAIYKSQAETGEIKGHYLNATAGTCEEMLKRAVFARELGVPIVMHDYLTGGFTANTTLSHYCRDNGLLLHIHRAMHAVIDRQKNHGMHFRVLAKALRLSGGDHIHAGTVVGKLEGEREITLGFVDLLRDDYIKKDRSRGIYFTQDWVSLPGVIPVASGGIHVWHMPALTEIFGDDSVLQFGGGTLGHPWGNAPGAVANRVALEACVQARNEGRDLAREGNAIIREACKWSPELAAACEVWKEIKFEFPAMDTL.

Residues 1-2 constitute a propeptide that is removed on maturation; that stretch reads MS. The residue at position 3 (P3) is an N-acetylproline. The residue at position 14 (K14) is an N6,N6,N6-trimethyllysine. Residue K175 is the Proton acceptor of the active site. Positions 175 and 177 each coordinate D-ribulose 1,5-bisphosphate. Residues K201, D203, and E204 each coordinate Mg(2+). An N6-carboxylysine modification is found at K201. E204 is a D-ribulose 1,5-bisphosphate binding site. The active-site Proton acceptor is H294. 7 residues coordinate D-ribulose 1,5-bisphosphate: R295, H327, K334, S379, G381, G403, and G404.

The protein belongs to the RuBisCO large chain family. Type I subfamily. In terms of assembly, heterohexadecamer of 8 large chains and 8 small chains. Heterohexadecamer; disulfide-linked. The disulfide link is formed within the large subunit homodimers. It depends on Mg(2+) as a cofactor. In terms of processing, the disulfide bond which can form in the large chain dimeric partners within the hexadecamer appears to be associated with oxidative stress and protein turnover.

It is found in the plastid. Its subcellular location is the chloroplast. It carries out the reaction 2 (2R)-3-phosphoglycerate + 2 H(+) = D-ribulose 1,5-bisphosphate + CO2 + H2O. The catalysed reaction is D-ribulose 1,5-bisphosphate + O2 = 2-phosphoglycolate + (2R)-3-phosphoglycerate + 2 H(+). Functionally, ruBisCO catalyzes two reactions: the carboxylation of D-ribulose 1,5-bisphosphate, the primary event in carbon dioxide fixation, as well as the oxidative fragmentation of the pentose substrate in the photorespiration process. Both reactions occur simultaneously and in competition at the same active site. Binds to abscisic acid (ABA); only half of the possible binding sites are occupied in the crystal and there are indications this is a low affinity site. This chain is Ribulose bisphosphate carboxylase large chain, found in Pisum sativum (Garden pea).